Reading from the N-terminus, the 196-residue chain is Dimiconin (196 aa).

Positions 1–21 (MKTIIVVTIFGILTCAYPTDG) are cleaved as a signal peptide. N-linked (GlcNAc...) asparagine glycosylation is found at N62 and N187.

Belongs to the calycin superfamily. Triabin family. In terms of tissue distribution, salivary gland.

The protein localises to the secreted. In terms of biological role, inhibits the intrinsic blood coagulation pathway by blocking the activation of host coagulation factor XII (F12) but not the enzymatic activity of activated F12. The polypeptide is Dimiconin (Triatoma dimidiata (Kissing bug)).